Consider the following 103-residue polypeptide: Large ribosomal subunit protein uL24 (103 aa).

This sequence belongs to the universal ribosomal protein uL24 family. In terms of assembly, part of the 50S ribosomal subunit.

One of two assembly initiator proteins, it binds directly to the 5'-end of the 23S rRNA, where it nucleates assembly of the 50S subunit. In terms of biological role, one of the proteins that surrounds the polypeptide exit tunnel on the outside of the subunit. The sequence is that of Large ribosomal subunit protein uL24 from Treponema pallidum (strain Nichols).